Consider the following 258-residue polypeptide: MKITKIEKKKRLYLVEIDKKESLYVTEDTIVKYMLTKEKALSKDQLEDIKNFAQFSHGKNLALYFISFKQRTEKEVRDYLFKHEINPHIIPQIIDNLKKDHWIDDYKLLESLAQQNLNSGDKGAYALKQKWLQKGCEKQVIDEVLTQFDFSEVAIKVTSKLLRKYQGKLPTKSLKDKLIQNLINKGFSFQESKNAINQLELEADEENEQALLYKEIEKQYQKFSKKYDGYELKQHLTQSLFRKGYDFDAIASALREYF.

This sequence belongs to the RecX family.

It localises to the cytoplasm. Functionally, modulates RecA activity. The polypeptide is Regulatory protein RecX (Streptococcus thermophilus (strain ATCC BAA-491 / LMD-9)).